Consider the following 395-residue polypeptide: Elongation factor Tu (395 aa).

Residues 10–204 enclose the tr-type G domain; the sequence is KPHVNIGTIG…TVDEYIPTPQ (195 aa). A G1 region spans residues 19-26; that stretch reads GHVDHGKT. Residue 19 to 26 participates in GTP binding; sequence GHVDHGKT. Thr26 contacts Mg(2+). Positions 60-64 are G2; sequence GITIN. Positions 81–84 are G3; sequence DAPG. Residues 81–85 and 136–139 contribute to the GTP site; these read DAPGH and NKCD. A G4 region spans residues 136-139; it reads NKCD. Residues 174-176 are G5; the sequence is SAL.

It belongs to the TRAFAC class translation factor GTPase superfamily. Classic translation factor GTPase family. EF-Tu/EF-1A subfamily. Monomer.

It is found in the cytoplasm. It catalyses the reaction GTP + H2O = GDP + phosphate + H(+). Its function is as follows. GTP hydrolase that promotes the GTP-dependent binding of aminoacyl-tRNA to the A-site of ribosomes during protein biosynthesis. The sequence is that of Elongation factor Tu from Ligilactobacillus salivarius (strain UCC118) (Lactobacillus salivarius).